A 490-amino-acid polypeptide reads, in one-letter code: Protein OrfX3 (490 aa).

This sequence belongs to the TULIP P47 family. As to quaternary structure, part of a crude toxin extract that includes BoNTA2/NTNH, P47, OrfX2 and OrfX3; OrfX1 was not detected. Shorter forms of this protein are seen in vivo.

In terms of biological role, part of a botulinum neurotoxin type A2 (BoNT) locus; may be part of a progenitor toxin complex required to protect BoNT during its passage through the host gastrointestinal tract. The protein is Protein OrfX3 (orfX3) of Clostridium botulinum (strain Kyoto / Type A2).